A 601-amino-acid chain; its full sequence is ATP-dependent lipid A-core flippase (601 aa).

Helical transmembrane passes span 27–47 (IGLF…QPML), 83–103 (LLIV…NYFL), 174–194 (LLWM…LIAV), and 267–287 (PLLQ…VLYL). Residues 31–322 (LISIVGFLIF…LSEVSSTIQK (292 aa)) enclose the ABC transmembrane type-1 domain. One can recognise an ABC transporter domain in the interval 354–590 (LEVRNLSFTY…NGYYSRLHAM (237 aa)). Residue 388 to 395 (GRSGSGKS) coordinates ATP.

The protein belongs to the ABC transporter superfamily. Lipid exporter (TC 3.A.1.106) family. In terms of assembly, homodimer.

Its subcellular location is the cell inner membrane. It carries out the reaction ATP + H2O + lipid A-core oligosaccharideSide 1 = ADP + phosphate + lipid A-core oligosaccharideSide 2.. Its function is as follows. Involved in lipopolysaccharide (LPS) biosynthesis. Translocates lipid A-core from the inner to the outer leaflet of the inner membrane. Transmembrane domains (TMD) form a pore in the inner membrane and the ATP-binding domain (NBD) is responsible for energy generation. In Pseudomonas fluorescens (strain ATCC BAA-477 / NRRL B-23932 / Pf-5), this protein is ATP-dependent lipid A-core flippase.